A 404-amino-acid polypeptide reads, in one-letter code: Spore development regulator RYP2 (404 aa).

Disordered stretches follow at residues 1–46 (MSAP…RKAV), 200–231 (LLKRPLNRAEPDYPAPPTQPRTPERSGASSQQ), and 382–404 (SGQSFSQSAGHMQSPSQVPPAWG). Residues 17–194 (LQSADFRLTV…ADQGVKLRIR (178 aa)) form the Velvet domain. Residues 29–46 (NPERARVAGGKEKERKAV) show a composition bias toward basic and acidic residues. The span at 382–397 (SGQSFSQSAGHMQSPS) shows a compositional bias: polar residues.

Belongs to the velvet family. VosA subfamily. In terms of assembly, forms a heterodimeric complex with RYP3; the formation of the RYP2-RYP3 complex is light-dependent.

Its subcellular location is the nucleus. Functionally, component of the RYP2-RYP3 heterodimeric complex that plays a dual role in activating genes associated with spore maturation and repressing certain development-associated genes. The complex binds DNA through the DNA-binding domain of vosA that recognizes an 11-nucleotide consensus sequence 5'-CTGGCCGCGGC-3' consisting of two motifs in the promoters of key developmental regulatory genes. Required for viable spore production and regulation of sporulation in response to temperature and for the switch to yeast-form in the presence of host cells. This is Spore development regulator RYP2 from Ajellomyces capsulatus (Darling's disease fungus).